Here is a 124-residue protein sequence, read N- to C-terminus: Large ribosomal subunit protein bL19 (124 aa).

It belongs to the bacterial ribosomal protein bL19 family.

Its function is as follows. This protein is located at the 30S-50S ribosomal subunit interface and may play a role in the structure and function of the aminoacyl-tRNA binding site. The polypeptide is Large ribosomal subunit protein bL19 (Dinoroseobacter shibae (strain DSM 16493 / NCIMB 14021 / DFL 12)).